A 309-amino-acid chain; its full sequence is Ribosomal protein L11 methyltransferase (309 aa).

Thr-152, Gly-178, Asp-200, and Asn-242 together coordinate S-adenosyl-L-methionine.

It belongs to the methyltransferase superfamily. PrmA family.

The protein resides in the cytoplasm. The catalysed reaction is L-lysyl-[protein] + 3 S-adenosyl-L-methionine = N(6),N(6),N(6)-trimethyl-L-lysyl-[protein] + 3 S-adenosyl-L-homocysteine + 3 H(+). Its function is as follows. Methylates ribosomal protein L11. This chain is Ribosomal protein L11 methyltransferase, found in Pelobacter propionicus (strain DSM 2379 / NBRC 103807 / OttBd1).